We begin with the raw amino-acid sequence, 969 residues long: MFINLNVHSHYSLLNSTLSIDDLIKYALDNKQPYVCLTDLNNMYGCIEFYDKAKAHNLTPIIGLEFEYQNATLVAYAKNYNGYLKLIKWSSWIMTSKEFEIQDDFDDLIIVCKKGTIVFKSPNFYQTHDQNAPNAIALQSVFYANKNDKIVFLAMLAIKNDLKLEDFKNCCDFDNNHFLNDNLAQSFFSPIALNNLNKVLNELKVQIHDLPINIPVYDKQNSIISSEILKQLCISGLKKRLNANDGQVNKIYVQRLKYELDVINEKQFDDYFLIVYDFINFAKSNGIIVGPGRGSAAGSLVAYCLHITDIDPIKHNLIFERFLNPTRKSMPDIDTDIMDEKRDLVIEYLFEKYGNDHVAYILTFQRLKAKMAIRDVGRILGIDLKVIDKICKNIKPEYDEDLDLAIKKNTILKEMYLLHKELFEISKKLINAPRQIGTHAAGIILSDSLISNIIPIQLGINDRPLSQYSMEYLERFGLIKMDLLGLKNLTIIDNVLKMIYENQNKKIDLFNINYNDKFVFEDLAKARTNGIFQLESPGMKKVLLKVKPQNIEDISIVSALFRPGPQQNIKTFVERRFKREEFSYWNEATRKILEPTYGIIVYQEQVIELVKTIANFDIATSDNFRRAISKKDEKILIQLKDDFINGALNNNYKQPLVNQIFEYIFSFAHYGFNHSHSLAYSYISYWLAYLKHYYTLEFLSVLLSHTSASKDKLLSYLNEAKEFNISIKGPDIQYFSNDFVIDTQKQIIRFGFKTIKGFGDELLKKIKSALQKSTLSDYISYIDALKKGNVSLKNIEILIRVGTFDSFGINRLFLLNNLNEIFEKTGLNGHFFDLNLVGLDYAKDMSVNDRYLDDEIQYLGIDLNSLNYANYKTEIDYNKLKYTIKDFYEINTNYETNILAQVLNIKQSKTKNGNDIFYLETLIDNKKQTLTIFQNSKYLIDEISIGGIYVFGVKLLNHFNFIVNIKQRI.

Belongs to the DNA polymerase type-C family. DnaE subfamily. DNA polymerase III contains a core (composed of alpha, epsilon and theta chains) that associates with a tau subunit. This core dimerizes to form the PolIII' complex. PolIII' associates with the gamma complex (composed of gamma, delta, delta', psi and chi chains) and with the beta chain to form the complete DNA polymerase III complex.

The protein resides in the cytoplasm. It carries out the reaction DNA(n) + a 2'-deoxyribonucleoside 5'-triphosphate = DNA(n+1) + diphosphate. In terms of biological role, DNA polymerase III is a complex, multichain enzyme responsible for most of the replicative synthesis in bacteria. This DNA polymerase also exhibits 3' to 5' exonuclease activity. The alpha chain is the DNA polymerase. The sequence is that of DNA polymerase III subunit alpha (dnaE) from Ureaplasma parvum serovar 3 (strain ATCC 700970).